A 211-amino-acid chain; its full sequence is ATP-dependent Clp protease proteolytic subunit 2 (211 aa).

Ser-106 serves as the catalytic Nucleophile. Residue His-131 is part of the active site.

It belongs to the peptidase S14 family. Fourteen ClpP subunits assemble into 2 heptameric rings which stack back to back to give a disk-like structure with a central cavity, resembling the structure of eukaryotic proteasomes.

Its subcellular location is the cytoplasm. The catalysed reaction is Hydrolysis of proteins to small peptides in the presence of ATP and magnesium. alpha-casein is the usual test substrate. In the absence of ATP, only oligopeptides shorter than five residues are hydrolyzed (such as succinyl-Leu-Tyr-|-NHMec, and Leu-Tyr-Leu-|-Tyr-Trp, in which cleavage of the -Tyr-|-Leu- and -Tyr-|-Trp bonds also occurs).. In terms of biological role, cleaves peptides in various proteins in a process that requires ATP hydrolysis. Has a chymotrypsin-like activity. Plays a major role in the degradation of misfolded proteins. In Bradyrhizobium diazoefficiens (strain JCM 10833 / BCRC 13528 / IAM 13628 / NBRC 14792 / USDA 110), this protein is ATP-dependent Clp protease proteolytic subunit 2.